A 233-amino-acid polypeptide reads, in one-letter code: Ribonuclease 3 (233 aa).

Residues 7–136 (KQYLLSEFNI…FIGALYLDQG (130 aa)) form the RNase III domain. Glu-49 provides a ligand contact to Mg(2+). Asp-53 is an active-site residue. Mg(2+)-binding residues include Asp-122 and Glu-125. Residue Glu-125 is part of the active site. One can recognise a DRBM domain in the interval 162–232 (DFKSRLQEKL…ARAALKLLEE (71 aa)).

The protein belongs to the ribonuclease III family. In terms of assembly, homodimer. Mg(2+) is required as a cofactor.

It is found in the cytoplasm. The enzyme catalyses Endonucleolytic cleavage to 5'-phosphomonoester.. Its function is as follows. Digests double-stranded RNA. Involved in the processing of primary rRNA transcript to yield the immediate precursors to the large and small rRNAs (23S and 16S). Processes some mRNAs, and tRNAs when they are encoded in the rRNA operon. Processes pre-crRNA and tracrRNA of type II CRISPR loci if present in the organism. This chain is Ribonuclease 3, found in Leuconostoc citreum (strain KM20).